A 385-amino-acid polypeptide reads, in one-letter code: Benzoate O-methyltransferase (385 aa).

Tyr18 lines the S-adenosyl-L-homocysteine pocket. Gln25 is a binding site for benzoate. Residues Cys59, Asn64, Asp106, Leu107, Ser145, and Tyr146 each contribute to the S-adenosyl-L-homocysteine site. Residue Trp167 participates in benzoate binding. Mg(2+)-binding residues include Asn184, Glu270, Phe272, and Asn273.

Belongs to the methyltransferase superfamily. Type-7 methyltransferase family. SABATH subfamily. Requires Mg(2+) as cofactor.

It catalyses the reaction benzoate + S-adenosyl-L-methionine = methyl benzoate + S-adenosyl-L-homocysteine. In terms of biological role, methyltransferase involved in the biosynthesis of methyl benzoate in response to stresses. Utilizes exclusively benzoic acid (BA) as substrate. This Zea mays (Maize) protein is Benzoate O-methyltransferase (OMT8).